The sequence spans 167 residues: Cofilin-2 (167 aa).

The 150-residue stretch at 4-153 folds into the ADF-H domain; sequence GVTVNDEVIK…KDRCTLADKL (150 aa). The Nuclear localization signal signature appears at 30–34; sequence KKRKK.

The protein belongs to the actin-binding proteins ADF family.

It localises to the nucleus matrix. Its subcellular location is the cytoplasm. The protein localises to the cytoskeleton. Functionally, controls reversibly actin polymerization and depolymerization in a pH-sensitive manner. It has the ability to bind G- and F-actin in a 1:1 ratio of cofilin to actin. It is the major component of intranuclear and cytoplasmic actin rods. This chain is Cofilin-2 (cfl2), found in Xenopus tropicalis (Western clawed frog).